The sequence spans 307 residues: MSELTKAQQQNFTKLQKKIRRNTGKAIADYNMIEDGDRIMVCLSGGKDSFTMLDILIGLKKSAPISFDLIAVNLDQKQPGFPTHILPEYLDTLGVEYRVVEEDTYSIVQDKLIEGKTTCSLCSRLRRGILYRTAKELGATKIALGHHRDDILETMFLNMFYGGKLKGMPPKLVSDNGEHVVIRPLAYCREKDIIKYADLADYPIIPCNLCGSQPNMQRQNIKQMLNTWDTQFPGRIESMFTAMQNVVPSHLADFNTFDFKSINRDSGVINGGDIGFDKEEMPVQPVDIDDAVTEFDPSLKLDIVNVQ.

The PP-loop motif motif lies at 44–49 (SGGKDS). Residues C119, C122, and C210 each coordinate [4Fe-4S] cluster.

Belongs to the TtcA family. In terms of assembly, homodimer. Mg(2+) serves as cofactor. It depends on [4Fe-4S] cluster as a cofactor.

The protein resides in the cytoplasm. It catalyses the reaction cytidine(32) in tRNA + S-sulfanyl-L-cysteinyl-[cysteine desulfurase] + AH2 + ATP = 2-thiocytidine(32) in tRNA + L-cysteinyl-[cysteine desulfurase] + A + AMP + diphosphate + H(+). It functions in the pathway tRNA modification. Catalyzes the ATP-dependent 2-thiolation of cytidine in position 32 of tRNA, to form 2-thiocytidine (s(2)C32). The sulfur atoms are provided by the cysteine/cysteine desulfurase (IscS) system. This Aliivibrio salmonicida (strain LFI1238) (Vibrio salmonicida (strain LFI1238)) protein is tRNA-cytidine(32) 2-sulfurtransferase.